A 477-amino-acid chain; its full sequence is UDP-N-acetylmuramate--L-alanine ligase (477 aa).

112 to 118 (GAHGKTT) is an ATP binding site.

This sequence belongs to the MurCDEF family.

Its subcellular location is the cytoplasm. The enzyme catalyses UDP-N-acetyl-alpha-D-muramate + L-alanine + ATP = UDP-N-acetyl-alpha-D-muramoyl-L-alanine + ADP + phosphate + H(+). The protein operates within cell wall biogenesis; peptidoglycan biosynthesis. Its function is as follows. Cell wall formation. The protein is UDP-N-acetylmuramate--L-alanine ligase of Acidovorax ebreus (strain TPSY) (Diaphorobacter sp. (strain TPSY)).